A 79-amino-acid chain; its full sequence is Putative sulfur carrier protein TM_0983 (79 aa).

Residue cysteine 17 is the Cysteine persulfide intermediate of the active site.

It belongs to the sulfur carrier protein TusA family.

In Thermotoga maritima (strain ATCC 43589 / DSM 3109 / JCM 10099 / NBRC 100826 / MSB8), this protein is Putative sulfur carrier protein TM_0983.